Here is a 366-residue protein sequence, read N- to C-terminus: Cobalt-precorrin-5B C(1)-methyltransferase (366 aa).

Belongs to the CbiD family.

The enzyme catalyses Co-precorrin-5B + S-adenosyl-L-methionine = Co-precorrin-6A + S-adenosyl-L-homocysteine. Its pathway is cofactor biosynthesis; adenosylcobalamin biosynthesis; cob(II)yrinate a,c-diamide from sirohydrochlorin (anaerobic route): step 6/10. In terms of biological role, catalyzes the methylation of C-1 in cobalt-precorrin-5B to form cobalt-precorrin-6A. The chain is Cobalt-precorrin-5B C(1)-methyltransferase from Paraburkholderia phymatum (strain DSM 17167 / CIP 108236 / LMG 21445 / STM815) (Burkholderia phymatum).